Reading from the N-terminus, the 2046-residue chain is Protein TIC 214 (2046 aa).

The next 6 membrane-spanning stretches (helical) occupy residues 18–38, 54–74, 79–99, 125–145, 163–183, and 214–234; these read VSGP…LPFG, LYGI…FLSM, IYAA…YTFC, ILSL…LLAN, ISFM…FINL, and TFSV…PLIF. Disordered regions lie at residues 278 to 299, 320 to 472, and 1833 to 1898; these read DEDR…EDRS, ARSV…VPRE, and AKDS…EDEI. Basic and acidic residues-rich tracts occupy residues 322–335, 344–368, and 378–457; these read SVAE…EHRS, SVAE…RSVA, and AKKD…RSVA. The segment covering 1833-1866 has biased composition (low complexity); that stretch reads AKDSNANDINAKDSNANDINANDSNAKDSNANDI. A compositionally biased stretch (basic and acidic residues) spans 1882-1898; the sequence is NAKDSNADVPKKKEDEI.

It belongs to the TIC214 family. In terms of assembly, part of the Tic complex.

The protein localises to the plastid. It localises to the chloroplast inner membrane. Involved in protein precursor import into chloroplasts. May be part of an intermediate translocation complex acting as a protein-conducting channel at the inner envelope. The chain is Protein TIC 214 from Pinus koraiensis (Korean pine).